An 83-amino-acid chain; its full sequence is Exodeoxyribonuclease 7 small subunit (83 aa).

The protein belongs to the XseB family. Heterooligomer composed of large and small subunits.

It localises to the cytoplasm. The enzyme catalyses Exonucleolytic cleavage in either 5'- to 3'- or 3'- to 5'-direction to yield nucleoside 5'-phosphates.. In terms of biological role, bidirectionally degrades single-stranded DNA into large acid-insoluble oligonucleotides, which are then degraded further into small acid-soluble oligonucleotides. The polypeptide is Exodeoxyribonuclease 7 small subunit (Nitrobacter hamburgensis (strain DSM 10229 / NCIMB 13809 / X14)).